We begin with the raw amino-acid sequence, 931 residues long: Beta-mannosidase A (931 aa).

The first 21 residues, 1 to 21, serve as a signal peptide directing secretion; it reads MRHSIGLAAALLAPTLPVALG. 5 N-linked (GlcNAc...) asparagine glycosylation sites follow: Asn40, Asn79, Asn247, Asn282, and Asn347. Glu479 serves as the catalytic Proton donor. 8 N-linked (GlcNAc...) asparagine glycosylation sites follow: Asn550, Asn608, Asn658, Asn738, Asn790, Asn798, Asn830, and Asn918.

The protein belongs to the glycosyl hydrolase 2 family. Beta-mannosidase A subfamily. In terms of assembly, homodimer. N-glycosylated.

The protein localises to the secreted. It carries out the reaction Hydrolysis of terminal, non-reducing beta-D-mannose residues in beta-D-mannosides.. The protein operates within glycan metabolism; N-glycan degradation. In terms of biological role, exoglycosidase that cleaves the single beta-linked mannose residue from the non-reducing end of beta-mannosidic oligosaccharides of various complexity and length. Involved in the degradation of polymeric mannan and galactomannan. Releases the terminal mannose residue from mannobiose and mannotriose, as well as from galactosyl-mannobiose (GM2), galactosyl-mannotriose (GM3) and di-galactosyl-mannopentaose (G2M5). This chain is Beta-mannosidase A (mndA), found in Aspergillus niger.